Consider the following 138-residue polypeptide: ATP synthase subunit g, mitochondrial (138 aa).

The protein belongs to the ATPase g subunit family. In terms of assembly, F-type ATP synthases have 2 components, the catalytic core F(1) and the membrane-embedded component F(0), linked together by a central stalk and a peripheral stalk. The central stalk, also called rotor shaft, is often seen as part of F(1). The peripheral stalk is seen as part of F(0). F(0) contains the membrane channel next to the rotor. F-type ATP synthases form dimers but each monomer functions independently in ATP generation. The dimer consists of 17 different polypeptides: ATP1 (subunit alpha, 3 molecules per monomer, part of F(1)), ATP2 (subunit beta, 3 copies per monomer, part of F(1)), ATP3 (subunit gamma, part of the central stalk), ATP4 (subunit b, part of the peripheral stalk), ATP5/OSCP (subunit 5/OSCP, part of the peripheral stalk), ATP6 (subunit a, part of the peripheral stalk), ATP7 (subunit d, part of the peripheral stalk), ATP8 (subunit 8, part of the peripheral stalk), OLI1 (subunit c, part of the rotor, 10 molecules per monomer), ATP14 (subunit h, part of the peripheral stalk), ATP15 (subunit epsilon, part of the central stalk), ATP16 (subunit delta, part of the central stalk), ATP17 (subunit f, part of the peripheral stalk), ATP18 (subunit i/j, part of the peripheral stalk), ATP19 (subunit k, dimer-specific, at interface between monomers), ATP20 (subunit g, at interface between monomers), TIM11 (subunit e, at interface between monomers).

It is found in the mitochondrion inner membrane. In terms of biological role, mitochondrial membrane ATP synthase (F(1)F(0) ATP synthase or Complex V) produces ATP from ADP in the presence of a proton gradient across the membrane which is generated by electron transport complexes of the respiratory chain. F-type ATP synthases consist of two structural domains, F(1) - containing the extramembraneous catalytic core, and F(0) - containing the membrane proton channel, linked together by a central stalk and a peripheral stalk. During catalysis, ATP synthesis in the catalytic domain of F(1) is coupled via a rotary mechanism of the central stalk subunits to proton translocation. Part of the complex F(0) domain. Minor subunit located with subunit a/ATP6 in the membrane. Together with subunit e/TIM11, probably contributes to membrane curvature at the site of the ATP synthase dimer, ultimately contributing to formation of cristae. This is ATP synthase subunit g, mitochondrial from Yarrowia lipolytica (strain CLIB 122 / E 150) (Yeast).